Reading from the N-terminus, the 1418-residue chain is JmjC domain-containing histone demethylation protein 1 (1418 aa).

Disordered stretches follow at residues 1-86 (MIGA…SSST), 102-162 (APLS…STFD), and 308-329 (GADR…SDEN). Positions 44–60 (WIDRGDSQAASYDRDRV) are enriched in basic and acidic residues. A compositionally biased stretch (polar residues) spans 61 to 71 (TSNNDVYSSTN). A compositionally biased stretch (basic and acidic residues) spans 127 to 139 (STERPAKRPRSEK). Residues 143–162 (PLHQPQTTVAPDANPSSTFD) show a composition bias toward polar residues. Residues 308–321 (GADRASLDVPPRGD) show a composition bias toward basic and acidic residues. The PHD-type zinc-finger motif lies at 331 to 391 (QANCAACNLV…KFICRRCRPI (61 aa)). The region spanning 588 to 746 (VSQSKLGKLI…MQIKVAKIEK (159 aa)) is the JmjC domain. Residue threonine 639 participates in substrate binding. Residues histidine 642 and aspartate 644 each coordinate Fe cation. Residue lysine 659 coordinates substrate. Histidine 714 contributes to the Fe cation binding site. Disordered regions lie at residues 891 to 964 (PQWT…TVEI), 1090 to 1118 (NAAT…CDDC), 1130 to 1195 (YGRI…HTQR), and 1250 to 1394 (KPTA…DEPD). Over residues 907 to 925 (LTEKKPAGRPSRRSERNAE) the composition is skewed to basic and acidic residues. 2 stretches are compositionally biased toward basic and acidic residues: residues 1130 to 1143 (YGRI…ERSK) and 1186 to 1195 (AEGDMSHTQR). A compositionally biased stretch (polar residues) spans 1250–1263 (KPTASLVSPPTSQA). Residues 1341–1352 (SSKKPASRPSSS) show a composition bias toward low complexity.

Belongs to the JHDM1 histone demethylase family. The cofactor is Fe(2+).

The protein localises to the nucleus. The catalysed reaction is N(6),N(6)-dimethyl-L-lysyl(36)-[histone H3] + 2 2-oxoglutarate + 2 O2 = L-lysyl(36)-[histone H3] + 2 formaldehyde + 2 succinate + 2 CO2. Histone demethylase that specifically demethylates 'Lys-36' of histone H3, thereby playing a central role in histone code. The polypeptide is JmjC domain-containing histone demethylation protein 1 (jhd1) (Aspergillus fumigatus (strain ATCC MYA-4609 / CBS 101355 / FGSC A1100 / Af293) (Neosartorya fumigata)).